Here is a 59-residue protein sequence, read N- to C-terminus: Large ribosomal subunit protein uL30 (59 aa).

This sequence belongs to the universal ribosomal protein uL30 family. Part of the 50S ribosomal subunit.

The sequence is that of Large ribosomal subunit protein uL30 from Desulforamulus reducens (strain ATCC BAA-1160 / DSM 100696 / MI-1) (Desulfotomaculum reducens).